A 256-amino-acid chain; its full sequence is Triosephosphate isomerase (256 aa).

A substrate-binding site is contributed by 12–14 (NWK). His99 acts as the Electrophile in catalysis. The active-site Proton acceptor is Glu171. Substrate contacts are provided by residues Gly177, Ser217, and 238–239 (GG).

Belongs to the triosephosphate isomerase family. As to quaternary structure, homodimer.

The protein localises to the cytoplasm. It carries out the reaction D-glyceraldehyde 3-phosphate = dihydroxyacetone phosphate. It functions in the pathway carbohydrate biosynthesis; gluconeogenesis. Its pathway is carbohydrate degradation; glycolysis; D-glyceraldehyde 3-phosphate from glycerone phosphate: step 1/1. Involved in the gluconeogenesis. Catalyzes stereospecifically the conversion of dihydroxyacetone phosphate (DHAP) to D-glyceraldehyde-3-phosphate (G3P). The chain is Triosephosphate isomerase from Rubrobacter xylanophilus (strain DSM 9941 / JCM 11954 / NBRC 16129 / PRD-1).